The primary structure comprises 266 residues: Imidazole glycerol phosphate synthase subunit HisF (266 aa).

Active-site residues include Asp11 and Asp130.

The protein belongs to the HisA/HisF family. Heterodimer of HisH and HisF.

The protein localises to the cytoplasm. It catalyses the reaction 5-[(5-phospho-1-deoxy-D-ribulos-1-ylimino)methylamino]-1-(5-phospho-beta-D-ribosyl)imidazole-4-carboxamide + L-glutamine = D-erythro-1-(imidazol-4-yl)glycerol 3-phosphate + 5-amino-1-(5-phospho-beta-D-ribosyl)imidazole-4-carboxamide + L-glutamate + H(+). It participates in amino-acid biosynthesis; L-histidine biosynthesis; L-histidine from 5-phospho-alpha-D-ribose 1-diphosphate: step 5/9. Its function is as follows. IGPS catalyzes the conversion of PRFAR and glutamine to IGP, AICAR and glutamate. The HisF subunit catalyzes the cyclization activity that produces IGP and AICAR from PRFAR using the ammonia provided by the HisH subunit. This Verminephrobacter eiseniae (strain EF01-2) protein is Imidazole glycerol phosphate synthase subunit HisF.